Here is a 507-residue protein sequence, read N- to C-terminus: ATP synthase subunit alpha (507 aa).

Residue 169 to 176 (GDRQTGKT) coordinates ATP.

The protein belongs to the ATPase alpha/beta chains family. In terms of assembly, F-type ATPases have 2 components, CF(1) - the catalytic core - and CF(0) - the membrane proton channel. CF(1) has five subunits: alpha(3), beta(3), gamma(1), delta(1), epsilon(1). CF(0) has three main subunits: a(1), b(2) and c(9-12). The alpha and beta chains form an alternating ring which encloses part of the gamma chain. CF(1) is attached to CF(0) by a central stalk formed by the gamma and epsilon chains, while a peripheral stalk is formed by the delta and b chains.

Its subcellular location is the cell inner membrane. It catalyses the reaction ATP + H2O + 4 H(+)(in) = ADP + phosphate + 5 H(+)(out). Functionally, produces ATP from ADP in the presence of a proton gradient across the membrane. The alpha chain is a regulatory subunit. The polypeptide is ATP synthase subunit alpha (Magnetococcus marinus (strain ATCC BAA-1437 / JCM 17883 / MC-1)).